An 800-amino-acid polypeptide reads, in one-letter code: Leukocyte receptor cluster member 8 homolog (800 aa).

5 disordered regions span residues N118–S149, P175–F229, S245–Q273, T335–S394, and K407–G519. Low complexity-rich tracts occupy residues Q120 to G131 and N184 to S201. Polar residues predominate over residues S252 to T261. Over residues W338–S352 the composition is skewed to basic and acidic residues. Polar residues predominate over residues Q360 to A387. Residues S409–R418 are compositionally biased toward low complexity. 2 stretches are compositionally biased toward basic residues: residues S419–R433 and E508–G519. Residues D636–I800 form the PCI domain.

This is Leukocyte receptor cluster member 8 homolog (leng8) from Xenopus laevis (African clawed frog).